The chain runs to 70 residues: Small ribosomal subunit protein bS21 (70 aa).

The protein belongs to the bacterial ribosomal protein bS21 family.

The sequence is that of Small ribosomal subunit protein bS21 from Polaromonas naphthalenivorans (strain CJ2).